We begin with the raw amino-acid sequence, 507 residues long: ATP synthase subunit alpha, chloroplastic (507 aa).

ATP is bound at residue 170–177 (GDRQTGKT).

The protein belongs to the ATPase alpha/beta chains family. F-type ATPases have 2 components, CF(1) - the catalytic core - and CF(0) - the membrane proton channel. CF(1) has five subunits: alpha(3), beta(3), gamma(1), delta(1), epsilon(1). CF(0) has four main subunits: a, b, b' and c.

Its subcellular location is the plastid. It localises to the chloroplast thylakoid membrane. It catalyses the reaction ATP + H2O + 4 H(+)(in) = ADP + phosphate + 5 H(+)(out). Its function is as follows. Produces ATP from ADP in the presence of a proton gradient across the membrane. The alpha chain is a regulatory subunit. The polypeptide is ATP synthase subunit alpha, chloroplastic (Nymphaea alba (White water-lily)).